The following is a 430-amino-acid chain: Adenylosuccinate synthetase (430 aa).

GTP is bound by residues 12–18 and 40–42; these read GDEGKGK and GHT. Asp-13 serves as the catalytic Proton acceptor. Asp-13 and Gly-40 together coordinate Mg(2+). IMP-binding positions include 13–16, 38–41, Thr-130, Arg-144, Gln-224, Thr-239, and Arg-303; these read DEGK and NAGH. His-41 acts as the Proton donor in catalysis. 299-305 contacts substrate; the sequence is VNTGRKR. GTP contacts are provided by residues Arg-305, 331 to 333, and 413 to 415; these read KLD and STS.

It belongs to the adenylosuccinate synthetase family. In terms of assembly, homodimer. It depends on Mg(2+) as a cofactor.

The protein localises to the cytoplasm. The enzyme catalyses IMP + L-aspartate + GTP = N(6)-(1,2-dicarboxyethyl)-AMP + GDP + phosphate + 2 H(+). The protein operates within purine metabolism; AMP biosynthesis via de novo pathway; AMP from IMP: step 1/2. In terms of biological role, plays an important role in the de novo pathway of purine nucleotide biosynthesis. Catalyzes the first committed step in the biosynthesis of AMP from IMP. The chain is Adenylosuccinate synthetase from Rhodopseudomonas palustris (strain ATCC BAA-98 / CGA009).